The primary structure comprises 426 residues: Histidine--tRNA ligase (426 aa).

It belongs to the class-II aminoacyl-tRNA synthetase family. As to quaternary structure, homodimer.

The protein resides in the cytoplasm. It carries out the reaction tRNA(His) + L-histidine + ATP = L-histidyl-tRNA(His) + AMP + diphosphate + H(+). The chain is Histidine--tRNA ligase from Prochlorococcus marinus (strain MIT 9312).